Reading from the N-terminus, the 323-residue chain is tRNA U34 carboxymethyltransferase (323 aa).

Carboxy-S-adenosyl-L-methionine is bound by residues K91, W105, K110, G130, 181–182, M196, Y200, and R315; that span reads IE.

Belongs to the class I-like SAM-binding methyltransferase superfamily. CmoB family. Homotetramer.

It catalyses the reaction carboxy-S-adenosyl-L-methionine + 5-hydroxyuridine(34) in tRNA = 5-carboxymethoxyuridine(34) in tRNA + S-adenosyl-L-homocysteine + H(+). Catalyzes carboxymethyl transfer from carboxy-S-adenosyl-L-methionine (Cx-SAM) to 5-hydroxyuridine (ho5U) to form 5-carboxymethoxyuridine (cmo5U) at position 34 in tRNAs. The chain is tRNA U34 carboxymethyltransferase from Enterobacter sp. (strain 638).